We begin with the raw amino-acid sequence, 194 residues long: uncharacterized protein (194 aa).

It to A.aeolicus AQ_423.

This is an uncharacterized protein from Aquifex aeolicus (strain VF5).